The sequence spans 169 residues: Protein YABBY 7 (169 aa).

The C4-type zinc finger occupies 21 to 48 (CSFCATVLLVSVPCSSVLRVVAVQCGHC). The segment at 63 to 122 (SASIELTPQELDAGPPPGEYSDESSGDDREGRDAEDDAPAPAAAAVANKPPGRKQRTPSA) is disordered.

This sequence belongs to the YABBY family. As to expression, expressed in leaf sheaths and flowers.

Its subcellular location is the nucleus. This chain is Protein YABBY 7 (YAB7), found in Oryza sativa subsp. japonica (Rice).